The following is a 200-amino-acid chain: Dephospho-CoA kinase (200 aa).

Positions 3 to 200 (VLGLTGSIGM…LSGKPAAATR (198 aa)) constitute a DPCK domain. 11-16 (GMGKTT) serves as a coordination point for ATP.

This sequence belongs to the CoaE family.

The protein localises to the cytoplasm. It carries out the reaction 3'-dephospho-CoA + ATP = ADP + CoA + H(+). It functions in the pathway cofactor biosynthesis; coenzyme A biosynthesis; CoA from (R)-pantothenate: step 5/5. Catalyzes the phosphorylation of the 3'-hydroxyl group of dephosphocoenzyme A to form coenzyme A. The polypeptide is Dephospho-CoA kinase (Brucella melitensis biotype 1 (strain ATCC 23456 / CCUG 17765 / NCTC 10094 / 16M)).